The following is a 139-amino-acid chain: Putative pre-16S rRNA nuclease (139 aa).

Belongs to the YqgF nuclease family.

Its subcellular location is the cytoplasm. In terms of biological role, could be a nuclease involved in processing of the 5'-end of pre-16S rRNA. The chain is Putative pre-16S rRNA nuclease from Streptococcus sanguinis (strain SK36).